Reading from the N-terminus, the 121-residue chain is Small ribosomal subunit protein bS6m (121 aa).

Belongs to the bacterial ribosomal protein bS6 family. As to quaternary structure, component of the mitochondrial ribosome small subunit (28S) which comprises a 12S rRNA and about 30 distinct proteins.

It localises to the mitochondrion. The polypeptide is Small ribosomal subunit protein bS6m (MRPS6) (Gallus gallus (Chicken)).